We begin with the raw amino-acid sequence, 355 residues long: (R,S)-reticuline 7-O-methyltransferase (355 aa).

S-adenosyl-L-methionine is bound by residues 197–200 (VGGG), Asp-221, 221–222 (DL), 241–242 (DM), and Lys-255. His-259 serves as the catalytic Proton acceptor.

It belongs to the class I-like SAM-binding methyltransferase superfamily. Cation-independent O-methyltransferase family. As to quaternary structure, homodimer. Expressed in capsules, buds and stems, and at lower levels in leaves. Localized to parenchyma cells within the vascular bundle, but only to those cells distal to laticifers. In roots, found in the pericycle within the stele.

The enzyme catalyses (S)-reticuline + S-adenosyl-L-methionine = (S)-laudanine + S-adenosyl-L-homocysteine + H(+). The catalysed reaction is (R)-reticuline + S-adenosyl-L-methionine = (R)-laudanine + S-adenosyl-L-homocysteine + H(+). Its function is as follows. Catalyzes the transfer of a methyl group to reticuline to form laudanine. Methylates the simple catechols guaiacol and isovanillic acid as well as the tetrahydrobenzylisoquinolines (R)-reticuline, (S)-reticuline, (R,S)-orientaline, (R)-protosinomenine and (R,S)-isoorientaline. Involved in the production of laudanine. This Papaver somniferum (Opium poppy) protein is (R,S)-reticuline 7-O-methyltransferase.